Here is a 327-residue protein sequence, read N- to C-terminus: Probable cell division protein WhiA (327 aa).

Positions 275-308 form a DNA-binding region, H-T-H motif; it reads SLEELGQLADPPMTKDAVAGRIRRLLSMADRRAR.

This sequence belongs to the WhiA family.

Its function is as follows. Involved in cell division and chromosome segregation. The polypeptide is Probable cell division protein WhiA (Nocardia farcinica (strain IFM 10152)).